The sequence spans 92 residues: MESNFIDWHPADIIAGLRKKGTSMAAESRRNGLSSSTLANALSRPWPKGEMIIAKALGTDPWVIWPSRYHDPQTHEFIDRTQLMRSYTKPKK.

Residues 50–69 (EMIIAKALGTDPWVIWPSRY) constitute a DNA-binding region (H-T-H motif).

The protein belongs to the ner transcriptional regulatory family.

Functionally, this protein is involved in positive regulation of the metabolism of sugars. In Escherichia coli O157:H7, this protein is Sugar fermentation stimulation protein B (sfsB).